Here is a 629-residue protein sequence, read N- to C-terminus: Protein fem-1 homolog B (629 aa).

ANK repeat units follow at residues 47–77 (QRST…DVQQ), 89–118 (DGAT…NVNH), 122–151 (TNST…NISI), 155–184 (YDNT…DPNA), 188–217 (CGAT…AMVV), and 220–250 (HGMT…DAKS). One copy of the TPR repeat lies at 346-379 (SHPIIYRGAVYADNMQFEQCIKLWLHALQLRQKG). ANK repeat units lie at residues 485–529 (EGGS…NVNA) and 533–570 (MGNS…HTDM).

The protein belongs to the fem-1 family. In terms of assembly, component of a CRL2 E3 ubiquitin-protein ligase complex, also named ECS (Elongin BC-CUL2/5-SOCS-box protein) complex.

It localises to the cytoplasm. The protein localises to the nucleus. It participates in protein modification; protein ubiquitination. In terms of biological role, substrate-recognition component of a Cul2-RING (CRL2) E3 ubiquitin-protein ligase complex of the DesCEND (destruction via C-end degrons) pathway, which recognizes a C-degron located at the extreme C terminus of target proteins, leading to their ubiquitination and degradation. The C-degron recognized by the DesCEND pathway is usually a motif of less than ten residues and can be present in full-length proteins, truncated proteins or proteolytically cleaved forms. The CRL2(FEM1B) complex specifically recognizes proteins ending with -Gly-Leu-Asp-Arg, leading to their ubiquitination and degradation. This Xenopus laevis (African clawed frog) protein is Protein fem-1 homolog B.